The chain runs to 355 residues: Mitogen-activated protein kinase (355 aa).

Positions 23–311 (YDIQDVVGEG…VEEALKHPYL (289 aa)) constitute a Protein kinase domain. ATP contacts are provided by residues 29 to 37 (VGEGAYGVV) and Lys52. Asp147 serves as the catalytic Proton acceptor. The residue at position 183 (Thr183) is a Phosphothreonine. Positions 183 to 185 (TEY) match the TXY motif. The residue at position 185 (Tyr185) is a Phosphotyrosine.

Belongs to the protein kinase superfamily. CMGC Ser/Thr protein kinase family. MAP kinase subfamily. Post-translationally, dually phosphorylated on Thr-183 and Tyr-185, which activates the enzyme.

The protein resides in the nucleus. The enzyme catalyses L-seryl-[protein] + ATP = O-phospho-L-seryl-[protein] + ADP + H(+). The catalysed reaction is L-threonyl-[protein] + ATP = O-phospho-L-threonyl-[protein] + ADP + H(+). Activated by tyrosine and threonine phosphorylation. Responds to activation by environmental stress by phosphorylating downstream targets. This chain is Mitogen-activated protein kinase (MAPK), found in Fusarium vanettenii (Neocosmospora pisi).